Consider the following 310-residue polypeptide: Ribosomal RNA small subunit methyltransferase H (310 aa).

S-adenosyl-L-methionine contacts are provided by residues 35 to 37, D52, F79, D100, and Q107; that span reads GGH.

The protein belongs to the methyltransferase superfamily. RsmH family.

Its subcellular location is the cytoplasm. It carries out the reaction cytidine(1402) in 16S rRNA + S-adenosyl-L-methionine = N(4)-methylcytidine(1402) in 16S rRNA + S-adenosyl-L-homocysteine + H(+). Specifically methylates the N4 position of cytidine in position 1402 (C1402) of 16S rRNA. This Anaeromyxobacter sp. (strain Fw109-5) protein is Ribosomal RNA small subunit methyltransferase H.